Consider the following 146-residue polypeptide: 3-hydroxyacyl-[acyl-carrier-protein] dehydratase FabZ (146 aa).

Residue His49 is part of the active site.

This sequence belongs to the thioester dehydratase family. FabZ subfamily.

The protein localises to the cytoplasm. The catalysed reaction is a (3R)-hydroxyacyl-[ACP] = a (2E)-enoyl-[ACP] + H2O. Functionally, involved in unsaturated fatty acids biosynthesis. Catalyzes the dehydration of short chain beta-hydroxyacyl-ACPs and long chain saturated and unsaturated beta-hydroxyacyl-ACPs. The chain is 3-hydroxyacyl-[acyl-carrier-protein] dehydratase FabZ from Pseudomonas entomophila (strain L48).